The chain runs to 64 residues: Bacteriocin glycocin F (64 aa).

The first 21 residues, 1-21 (MSKLVKTLTISEISKAQNNGG), serve as a signal peptide directing secretion. Intrachain disulfides connect Cys-26/Cys-49 and Cys-33/Cys-42. The O-linked (GlcNAc) serine glycan is linked to Ser-39. An S-linked (GlcNAc) cysteine glycan is attached at Cys-64.

Its subcellular location is the secreted. Its function is as follows. Has antibacterial activity against L.plantarum ATCC 8014. In purified form, the activity is bacteriostatic (IC(50)=2 nM) rather than bactericidal. This chain is Bacteriocin glycocin F, found in Lactiplantibacillus plantarum (Lactobacillus plantarum).